The chain runs to 757 residues: Probable inorganic carbon transporter subunit DabA (757 aa).

Residues C321, D323, H475, and C490 each coordinate Zn(2+).

The protein belongs to the inorganic carbon transporter (TC 9.A.2) DabA family. Forms a complex with DabB. Zn(2+) is required as a cofactor.

The protein localises to the cell inner membrane. In terms of biological role, part of an energy-coupled inorganic carbon pump. In Idiomarina loihiensis (strain ATCC BAA-735 / DSM 15497 / L2-TR), this protein is Probable inorganic carbon transporter subunit DabA.